We begin with the raw amino-acid sequence, 378 residues long: MGFSFDWDDIFQYSTVKIVRIRDRRLGILHLSFLVGIVAYIVVYSAIIKKGYLFTEVPIGSVRTSLKGPNTFASNLTYCSNQQHNGSTYPFTPLECNYWDEQLALFPVGQDSTFTCTTRVRLSKQEANCNFTDPTCKFVDEPGSAKNIYIADIESFTILIDHTMYASSSGSQFNAVDLHGYILNQDGDEVQIDANGTSIGVSGKPDIMTIGQLLSFGGVSLDQASPVDSNVSIRYDGVVLFVFITYSNTYTYSTSDFKYVYSVQQIANTIYDVPETIILESIHSRLLYKRHGIRVIFIQTGTIGSFHFQTLLLTLVSGLGLLAVATTVVDQLAIRLLPQRKSYSSLKFQVTESMSNPMKKRITTDEGEDVLYTRIEGL.

At 1–27 the chain is on the cytoplasmic side; the sequence is MGFSFDWDDIFQYSTVKIVRIRDRRLG. A helical transmembrane segment spans residues 28 to 48; sequence ILHLSFLVGIVAYIVVYSAII. Topologically, residues 49-307 are lumenal; that stretch reads KKGYLFTEVP…IQTGTIGSFH (259 aa). Positions 290-303 are pore-forming motif; that stretch reads RHGIRVIFIQTGTI. The helical transmembrane segment at 308 to 328 threads the bilayer; that stretch reads FQTLLLTLVSGLGLLAVATTV. Residues 329-378 lie on the Cytoplasmic side of the membrane; the sequence is VDQLAIRLLPQRKSYSSLKFQVTESMSNPMKKRITTDEGEDVLYTRIEGL.

This sequence belongs to the P2X receptor family.

It localises to the contractile vacuole membrane. Its function is as follows. P2X receptors are ATP-gated ion channels that play a role in intracellular calcium signaling. Not required for the purinergic response to extracellular nucleotides. Inward currents evoked by intracellular ATP and ATP analogs. Exclusively selective for ATP over other nucleotides. Insensitive to P2 receptor antagonists PPADS, suramin and 2',3'-O-(2,4,6-trinitrophenyl)-ATP but inhibited by nanomolar concentrations of copper and sodium ion. More permeable to ammonium than either sodium or potassium ions and less permeable to choline. It has been reported that p2xA is not essential for osmoregulation, however this information is in contradiction with another source which indicates that p2xA is required for osmoregulation. Found to be permeable to chloride ions. Inhibited by copper and sodium ions. The polypeptide is P2X receptor A (p2xA) (Dictyostelium discoideum (Social amoeba)).